The primary structure comprises 858 residues: Heat shock protein 105 kDa (858 aa).

Ser2 carries the post-translational modification N-acetylserine. An N6-acetyllysine modification is found at Lys471. Disordered stretches follow at residues 500-584 and 796-858; these read KVPT…PPEA and CEPV…MDLD. Over residues 504-514 the composition is skewed to acidic residues; it reads EENEMSSEADM. 2 positions are modified to phosphoserine: Ser509 and Ser510. A compositionally biased stretch (polar residues) spans 532–554; sequence QQDNSEAGTQPQVQTDAQQTSQS. Ser557 carries the phosphoserine modification. Phosphothreonine is present on Thr561. Composition is skewed to basic and acidic residues over residues 563–584 and 805–814; these read EENK…PPEA and PKIESPKLER. Ser809 is modified (phosphoserine). Thr815 bears the Phosphothreonine mark. Residues 821–832 are compositionally biased toward basic and acidic residues; sequence IDKKEEDLEDKN. A compositionally biased stretch (polar residues) spans 849–858; sequence EKNSVNMDLD.

It belongs to the heat shock protein 70 family. Interacts with HSPA8/HSC70. Interacts with HSPA1A (via NBD) and HSPA1B (via NBD). Post-translationally, phosphorylation on Ser-509 may be important for regulation of the HSPA8/HSC70 chaperone activity. Highly expressed in testis. Present at lower levels in most brain regions, except cerebellum. Overexpressed in cancer cells.

It localises to the cytoplasm. Functionally, acts as a nucleotide-exchange factor (NEF) for chaperone proteins HSPA1A and HSPA1B, promoting the release of ADP from HSPA1A/B thereby triggering client/substrate protein release. Prevents the aggregation of denatured proteins in cells under severe stress, on which the ATP levels decrease markedly. Inhibits HSPA8/HSC70 ATPase and chaperone activities. In Homo sapiens (Human), this protein is Heat shock protein 105 kDa (HSPH1).